The primary structure comprises 232 residues: Ureidoacrylate amidohydrolase RutB (232 aa).

D26 serves as the catalytic Proton acceptor. K135 is an active-site residue. The Nucleophile role is filled by C168.

It belongs to the isochorismatase family. RutB subfamily.

It catalyses the reaction (Z)-3-ureidoacrylate + H2O + H(+) = (Z)-3-aminoacrylate + NH4(+) + CO2. The catalysed reaction is (Z)-3-ureidoacrylate + H2O = (Z)-3-aminoacrylate + carbamate + H(+). The enzyme catalyses (Z)-2-methylureidoacrylate + H2O + H(+) = (Z)-2-methylaminoacrylate + NH4(+) + CO2. In terms of biological role, hydrolyzes ureidoacrylate to form aminoacrylate and carbamate. The carbamate hydrolyzes spontaneously, thereby releasing one of the nitrogen atoms of the pyrimidine ring as ammonia and one of its carbon atoms as CO2. The chain is Ureidoacrylate amidohydrolase RutB from Cronobacter turicensis (strain DSM 18703 / CCUG 55852 / LMG 23827 / z3032).